Here is a 430-residue protein sequence, read N- to C-terminus: Histidine--tRNA ligase (430 aa).

The protein belongs to the class-II aminoacyl-tRNA synthetase family. Homodimer.

It localises to the cytoplasm. It catalyses the reaction tRNA(His) + L-histidine + ATP = L-histidyl-tRNA(His) + AMP + diphosphate + H(+). The chain is Histidine--tRNA ligase from Acinetobacter baumannii (strain ATCC 17978 / DSM 105126 / CIP 53.77 / LMG 1025 / NCDC KC755 / 5377).